Consider the following 883-residue polypeptide: Probable valine--tRNA ligase, cytoplasmic (883 aa).

A compositionally biased stretch (basic and acidic residues) spans 1–23 (MTLKMDRKALKEEKKKQKLEKFL). The tract at residues 1 to 49 (MTLKMDRKALKEEKKKQKLEKFLNKKTTQSKISKAPKPAKNKSSSGYDP) is disordered. Positions 30 to 45 (SKISKAPKPAKNKSSS) are enriched in low complexity. A 'HIGH' region motif is present at residues 82–92 (PNITGSLHIGH). The short motif at 586-590 (KMSKS) is the 'KMSKS' region element. K589 is an ATP binding site.

It belongs to the class-I aminoacyl-tRNA synthetase family.

The protein resides in the cytoplasm. It catalyses the reaction tRNA(Val) + L-valine + ATP = L-valyl-tRNA(Val) + AMP + diphosphate. The sequence is that of Probable valine--tRNA ligase, cytoplasmic from Vairimorpha ceranae (strain BRL01) (Microsporidian parasite).